The following is a 213-amino-acid chain: uncharacterized protein (213 aa).

An N-terminal signal peptide occupies residues Met-1–Ala-21.

This is an uncharacterized protein from Rickettsia prowazekii (strain Madrid E).